A 100-amino-acid chain; its full sequence is Urease subunit gamma (100 aa).

It belongs to the urease gamma subunit family. In terms of assembly, heterotrimer of UreA (gamma), UreB (beta) and UreC (alpha) subunits. Three heterotrimers associate to form the active enzyme.

The protein resides in the cytoplasm. The catalysed reaction is urea + 2 H2O + H(+) = hydrogencarbonate + 2 NH4(+). Its pathway is nitrogen metabolism; urea degradation; CO(2) and NH(3) from urea (urease route): step 1/1. In Synechocystis sp. (strain ATCC 27184 / PCC 6803 / Kazusa), this protein is Urease subunit gamma.